Here is a 193-residue protein sequence, read N- to C-terminus: NADH-quinone oxidoreductase subunit B (193 aa).

The [4Fe-4S] cluster site is built by cysteine 72, cysteine 73, cysteine 137, and cysteine 167.

Belongs to the complex I 20 kDa subunit family. In terms of assembly, NDH-1 is composed of 14 different subunits. Subunits NuoB, C, D, E, F, and G constitute the peripheral sector of the complex. It depends on [4Fe-4S] cluster as a cofactor.

The protein resides in the cell inner membrane. The catalysed reaction is a quinone + NADH + 5 H(+)(in) = a quinol + NAD(+) + 4 H(+)(out). Its function is as follows. NDH-1 shuttles electrons from NADH, via FMN and iron-sulfur (Fe-S) centers, to quinones in the respiratory chain. The immediate electron acceptor for the enzyme in this species is believed to be ubiquinone. Couples the redox reaction to proton translocation (for every two electrons transferred, four hydrogen ions are translocated across the cytoplasmic membrane), and thus conserves the redox energy in a proton gradient. This Bartonella quintana (strain Toulouse) (Rochalimaea quintana) protein is NADH-quinone oxidoreductase subunit B.